Consider the following 268-residue polypeptide: Ribosomal RNA small subunit methyltransferase A (268 aa).

S-adenosyl-L-methionine is bound by residues Asn16, Leu18, Gly43, Glu64, Asp89, and Asn110.

The protein belongs to the class I-like SAM-binding methyltransferase superfamily. rRNA adenine N(6)-methyltransferase family. RsmA subfamily.

It localises to the cytoplasm. It catalyses the reaction adenosine(1518)/adenosine(1519) in 16S rRNA + 4 S-adenosyl-L-methionine = N(6)-dimethyladenosine(1518)/N(6)-dimethyladenosine(1519) in 16S rRNA + 4 S-adenosyl-L-homocysteine + 4 H(+). Functionally, specifically dimethylates two adjacent adenosines (A1518 and A1519) in the loop of a conserved hairpin near the 3'-end of 16S rRNA in the 30S particle. May play a critical role in biogenesis of 30S subunits. The polypeptide is Ribosomal RNA small subunit methyltransferase A (Pseudomonas savastanoi pv. phaseolicola (strain 1448A / Race 6) (Pseudomonas syringae pv. phaseolicola (strain 1448A / Race 6))).